Consider the following 769-residue polypeptide: 3-O-beta-D-glucopyranosyl-beta-D-glucuronide phosphorylase (769 aa).

Catalysis depends on Asp457, which acts as the Proton donor.

The protein belongs to the glycosyl hydrolase 94 family. As to quaternary structure, homodimer.

It localises to the cytoplasm. It carries out the reaction 3-O-beta-D-glucosyl-D-glucuronate + phosphate = aldehydo-D-glucuronate + alpha-D-glucose 1-phosphate. It catalyses the reaction a 3-O-beta-D-glucosyl-beta-D-glucuronoside + phosphate = a beta-D-glucuronoside + alpha-D-glucose 1-phosphate. Functionally, glycoside phosphorylase that catalyzes the reversible phosphorolysis of 3-O-beta-D-glucosyl-D-glucuronate into D-glucuronic acid and alpha-D-glucose 1-phosphate. Cannot phosphorolyze cellobionic acid and laminaribiose. In the reverse direction, using alpha-D-glucose 1-phosphate as a donor substrate, the enzyme acts on D-glucuronate and its artificial derivative p-nitrophenyl-beta-D-glucuronide. The apparent catalytic efficiency towards p-nitrophenyl-beta-D-glucuronide is approximately 5-fold higher than that towards D-glucuronic acid. Is probably involved in the metabolism of oligosaccharides containing the 3-O-beta-D-glucopyranosyl-beta-D-glucuronide structure released from bacterial and plant acidic carbohydrates. The protein is 3-O-beta-D-glucopyranosyl-beta-D-glucuronide phosphorylase of Paenibacillus borealis.